The chain runs to 338 residues: uncharacterized protein (338 aa).

The N-terminal stretch at 1–29 is a signal peptide; that stretch reads MIKQLYKNITICSLAISTALTVFPATSYA.

This sequence belongs to the aerolysin family.

This is an uncharacterized protein from Staphylococcus aureus (strain Mu50 / ATCC 700699).